We begin with the raw amino-acid sequence, 748 residues long: Phosphoenolpyruvate-dependent phosphotransferase system (748 aa).

Residues 1–127 (MLTRLREIVE…RRQLLGVLVV (127 aa)) enclose the GAF domain. The tract at residues 128 to 170 (QQRELRQYDESEESFLVTLATQMAAILSQSQLTALFGQYRQTR) is linker. Positions 171-748 (IRALPAAPGV…GMGGLIRGGL (578 aa)) are PTS EI. Residue His-356 is the Tele-phosphohistidine intermediate of the active site. Phosphoenolpyruvate-binding residues include Arg-462 and Arg-498. Mg(2+)-binding residues include Glu-597 and Asp-621. Phosphoenolpyruvate-binding positions include 620–621 (ND) and Arg-631. Catalysis depends on Cys-668, which acts as the Proton donor.

Belongs to the PEP-utilizing enzyme family. It depends on Mg(2+) as a cofactor.

Its subcellular location is the cytoplasm. It catalyses the reaction L-histidyl-[protein] + phosphoenolpyruvate = N(pros)-phospho-L-histidyl-[protein] + pyruvate. Inhibited by GDP and FAD. Component of the phosphoenolpyruvate-dependent nitrogen-metabolic phosphotransferase system (nitrogen-metabolic PTS), that seems to be involved in regulating nitrogen metabolism. Enzyme I-Ntr transfers the phosphoryl group from phosphoenolpyruvate (PEP) to the phosphoryl carrier protein (NPr). Could function in the transcriptional regulation of sigma-54 dependent operons in conjunction with the NPr (PtsO) and EIIA-Ntr (PtsN) proteins. Enzyme I-Ntr is specific for NPr. The protein is Phosphoenolpyruvate-dependent phosphotransferase system (ptsP) of Escherichia coli (strain K12).